Here is a 590-residue protein sequence, read N- to C-terminus: V-type ATP synthase alpha chain (590 aa).

ATP is bound at residue 231–238 (GPFGSGKT).

It belongs to the ATPase alpha/beta chains family.

It catalyses the reaction ATP + H2O + 4 H(+)(in) = ADP + phosphate + 5 H(+)(out). Produces ATP from ADP in the presence of a proton gradient across the membrane. The V-type alpha chain is a catalytic subunit. The polypeptide is V-type ATP synthase alpha chain (Clostridium botulinum (strain Langeland / NCTC 10281 / Type F)).